Consider the following 182-residue polypeptide: Putative manganese efflux pump MntP (182 aa).

Transmembrane regions (helical) follow at residues 6-26 (LIPL…VSLG), 37-57 (ILYI…IGMV), 71-91 (HFAG…STIL), 101-121 (IGIS…SVGL), 131-151 (IITI…GLLI), and 162-182 (YGEI…LFPI).

It belongs to the MntP (TC 9.B.29) family.

The protein localises to the cell membrane. In terms of biological role, probably functions as a manganese efflux pump. The sequence is that of Putative manganese efflux pump MntP from Bacillus cereus (strain B4264).